Consider the following 481-residue polypeptide: UDP-N-acetylmuramoylalanine--D-glutamate ligase (481 aa).

ATP is bound at residue 108–114; the sequence is GTNGKTS.

It belongs to the MurCDEF family.

It is found in the cytoplasm. The enzyme catalyses UDP-N-acetyl-alpha-D-muramoyl-L-alanine + D-glutamate + ATP = UDP-N-acetyl-alpha-D-muramoyl-L-alanyl-D-glutamate + ADP + phosphate + H(+). It participates in cell wall biogenesis; peptidoglycan biosynthesis. Cell wall formation. Catalyzes the addition of glutamate to the nucleotide precursor UDP-N-acetylmuramoyl-L-alanine (UMA). The polypeptide is UDP-N-acetylmuramoylalanine--D-glutamate ligase (Bifidobacterium longum (strain DJO10A)).